A 123-amino-acid polypeptide reads, in one-letter code: Immunoglobulin lambda variable 5-45 (123 aa).

The signal sequence occupies residues M1–S19. The framework-1 stretch occupies residues Q20–C44. The Ig-like domain occupies Q20–S123. C41 and C115 form a disulfide bridge. Residues S45–R53 are complementarity-determining-1. The segment at I54–R70 is framework-2. The segment at L68–D92 is disordered. The interval Y71–K77 is complementarity-determining-2. A compositionally biased stretch (polar residues) spans Q78–D92. The tract at residues Q78–C115 is framework-3. A complementarity-determining-3 region spans residues M116–S123.

Immunoglobulins are composed of two identical heavy chains and two identical light chains; disulfide-linked.

Its subcellular location is the secreted. It is found in the cell membrane. Functionally, v region of the variable domain of immunoglobulin light chains that participates in the antigen recognition. Immunoglobulins, also known as antibodies, are membrane-bound or secreted glycoproteins produced by B lymphocytes. In the recognition phase of humoral immunity, the membrane-bound immunoglobulins serve as receptors which, upon binding of a specific antigen, trigger the clonal expansion and differentiation of B lymphocytes into immunoglobulins-secreting plasma cells. Secreted immunoglobulins mediate the effector phase of humoral immunity, which results in the elimination of bound antigens. The antigen binding site is formed by the variable domain of one heavy chain, together with that of its associated light chain. Thus, each immunoglobulin has two antigen binding sites with remarkable affinity for a particular antigen. The variable domains are assembled by a process called V-(D)-J rearrangement and can then be subjected to somatic hypermutations which, after exposure to antigen and selection, allow affinity maturation for a particular antigen. This chain is Immunoglobulin lambda variable 5-45, found in Homo sapiens (Human).